A 1241-amino-acid polypeptide reads, in one-letter code: ATP-dependent helicase/nuclease subunit A (1241 aa).

A UvrD-like helicase ATP-binding domain is found at 12–485 (SQWTDDQWKA…IDLAKNFRSR (474 aa)). 33–40 (AAAGSGKT) is an ATP binding site. The UvrD-like helicase C-terminal domain occupies 505-805 (GEIDYDADAE…RIMTIHKSKG (301 aa)).

The protein belongs to the helicase family. AddA subfamily. As to quaternary structure, heterodimer of AddA and AddB/RexB. It depends on Mg(2+) as a cofactor.

The catalysed reaction is Couples ATP hydrolysis with the unwinding of duplex DNA by translocating in the 3'-5' direction.. It carries out the reaction ATP + H2O = ADP + phosphate + H(+). Its function is as follows. The heterodimer acts as both an ATP-dependent DNA helicase and an ATP-dependent, dual-direction single-stranded exonuclease. Recognizes the chi site generating a DNA molecule suitable for the initiation of homologous recombination. The AddA nuclease domain is required for chi fragment generation; this subunit has the helicase and 3' -&gt; 5' nuclease activities. The sequence is that of ATP-dependent helicase/nuclease subunit A from Bacillus cereus (strain B4264).